We begin with the raw amino-acid sequence, 261 residues long: Hemin import ATP-binding protein HmuV (261 aa).

The ABC transporter domain maps to 3–239 (LDAADITVKL…AILSQAYGCA (237 aa)). An ATP-binding site is contributed by 35–42 (GPNGSGKT).

Belongs to the ABC transporter superfamily. Heme (hemin) importer (TC 3.A.1.14.5) family. In terms of assembly, the complex is composed of two ATP-binding proteins (HmuV), two transmembrane proteins (HmuU) and a solute-binding protein (HmuT).

Its subcellular location is the cell inner membrane. Its function is as follows. Part of the ABC transporter complex HmuTUV involved in hemin import. Responsible for energy coupling to the transport system. This chain is Hemin import ATP-binding protein HmuV, found in Roseobacter denitrificans (strain ATCC 33942 / OCh 114) (Erythrobacter sp. (strain OCh 114)).